The chain runs to 287 residues: rRNA adenine N-6-methyltransferase (287 aa).

Positions 1–13 (MKKKNHKYRGKKL) are enriched in basic residues. A disordered region spans residues 1-21 (MKKKNHKYRGKKLNRGESPNF). The S-adenosyl-L-methionine site is built by histidine 25, methionine 27, glycine 52, glutamate 73, aspartate 98, and asparagine 114.

It belongs to the class I-like SAM-binding methyltransferase superfamily. rRNA adenine N(6)-methyltransferase family. As to quaternary structure, homodimer.

Involved in erythromycin resistance. In Bacillus anthracis, this protein is rRNA adenine N-6-methyltransferase (ermJ).